The chain runs to 2769 residues: Thyroglobulin (2769 aa).

A signal peptide spans 1–19 (MALALWVFGLLDLICLASA). Residue tyrosine 24 is modified to Iodotyrosine; alternate. Residue tyrosine 24 is modified to Sulfotyrosine; alternate. The residue at position 24 (tyrosine 24) is a Thyroxine; alternate. At tyrosine 24 the chain carries Triiodothyronine; alternate. Thyroglobulin type-1 domains lie at 31 to 92 (LRPC…PAAC), 93 to 160 (LSFC…PARC), 161 to 297 (PRSC…RFRC), and 298 to 358 (PTKC…PPSC). 8 disulfides stabilise this stretch: cysteine 34-cysteine 52, cysteine 63-cysteine 70, cysteine 72-cysteine 92, cysteine 96-cysteine 120, cysteine 131-cysteine 138, cysteine 140-cysteine 160, cysteine 164-cysteine 183, and cysteine 194-cysteine 235. An Iodotyrosine modification is found at tyrosine 108. N-linked (GlcNAc...) (complex) asparagine; alternate glycosylation occurs at asparagine 110. The N-linked (GlcNAc...) (hybrid) asparagine; alternate glycan is linked to asparagine 110. Tyrosine 149 is modified (iodotyrosine; alternate). Position 149 is a diiodotyrosine; alternate (tyrosine 149). 2 positions are modified to iodotyrosine: tyrosine 234 and tyrosine 258. 9 cysteine pairs are disulfide-bonded: cysteine 301–cysteine 319, cysteine 330–cysteine 336, cysteine 338–cysteine 358, cysteine 364–cysteine 619, cysteine 408–cysteine 607, cysteine 630–cysteine 635, cysteine 637–cysteine 657, cysteine 661–cysteine 686, and cysteine 697–cysteine 702. Residues asparagine 483 and asparagine 495 are each glycosylated (N-linked (GlcNAc...) (complex) asparagine; alternate). N-linked (GlcNAc...) (hybrid) asparagine; alternate glycans are attached at residues asparagine 483 and asparagine 495. 6 Thyroglobulin type-1 domains span residues 604-657 (SQGC…RPRC), 658-725 (PTEC…PKKC), 726-921 (PSPC…VPAC), 922-1073 (PGSC…IPQC), 1074-1145 (PTSC…SAQC), and 1146-1210 (PSLC…QPAC). Tyrosine 703 carries the post-translational modification Iodotyrosine; alternate. Residue tyrosine 703 is modified to Thyroxine; alternate. Residue tyrosine 703 is modified to Triiodothyronine; alternate. Tyrosine 703 carries the post-translational modification Diiodotyrosine; alternate. 16 disulfide bridges follow: cysteine 704/cysteine 725, cysteine 729/cysteine 762, cysteine 773/cysteine 898, cysteine 900/cysteine 921, cysteine 925/cysteine 1031, cysteine 1042/cysteine 1049, cysteine 1051/cysteine 1073, cysteine 1077/cysteine 1108, cysteine 1126/cysteine 1145, cysteine 1149/cysteine 1169, cysteine 1181/cysteine 1188, cysteine 1190/cysteine 1210, cysteine 1215/cysteine 1264, cysteine 1231/cysteine 1245, cysteine 1306/cysteine 1356, and cysteine 1331/cysteine 1347. Tyrosine 784 carries the iodotyrosine modification. N-linked (GlcNAc...) (complex) asparagine; alternate glycosylation occurs at asparagine 853. An N-linked (GlcNAc...) (hybrid) asparagine; alternate glycan is attached at asparagine 853. Tyrosine 866 carries the iodotyrosine; alternate modification. Tyrosine 866 is modified (diiodotyrosine; alternate). Diiodotyrosine is present on tyrosine 883. A glycan (N-linked (GlcNAc...) (complex) asparagine; alternate) is linked at asparagine 947. Asparagine 947 carries an N-linked (GlcNAc...) (hybrid) asparagine; alternate glycan. Tyrosine 992 carries the iodotyrosine; alternate modification. Position 992 is a diiodotyrosine; alternate (tyrosine 992). Asparagine 1140 carries N-linked (GlcNAc...) (complex) asparagine; alternate glycosylation. Asparagine 1140 carries an N-linked (GlcNAc...) (hybrid) asparagine; alternate glycan. An Iodotyrosine modification is found at tyrosine 1310. A Thyroxine modification is found at tyrosine 1310. N-linked (GlcNAc...) (high mannose) asparagine glycosylation is present at asparagine 1365. Cystine bridges form between cysteine 1441-cysteine 1461, cysteine 1464-cysteine 1475, cysteine 1478-cysteine 1492, cysteine 1495-cysteine 1512, cysteine 1516-cysteine 1525, cysteine 1545-cysteine 1567, cysteine 1605-cysteine 1629, cysteine 1609-cysteine 1615, cysteine 1641-cysteine 1664, cysteine 1726-cysteine 1751, cysteine 1730-cysteine 1736, cysteine 1735-cysteine 1836, and cysteine 1762-cysteine 1779. Type II repeat units lie at residues 1458 to 1471 (ALGC…SYFQ), 1472 to 1488 (DEQC…EQAG), and 1489 to 1505 (SLAC…VYAG). Tyrosine 1469 is modified (iodotyrosine; alternate). Tyrosine 1469 is modified (diiodotyrosine; alternate). The Thyroglobulin type-1 11 domain occupies 1513 to 1567 (VTDCQKNEVGLQCDQDSQYRASQRDRTSGKAFCVDGEGRRLPWTEAEAPLVDAQC). The Type IIIA repeat unit spans residues 1605–1725 (CLADCALDEA…GASLAEVHLF (121 aa)). The stretch at 1726-1893 (CLLACDHDSC…LFSLQQANLW (168 aa)) is one Type IIIB repeat. Asparagine 1776 carries an N-linked (GlcNAc...) (complex) asparagine; alternate glycan. N-linked (GlcNAc...) (hybrid) asparagine; alternate glycosylation occurs at asparagine 1776. Residues 1827–1842 (MGSRSESMGCRRDTEP) are compositionally biased toward basic and acidic residues. Residues 1827–1851 (MGSRSESMGCRRDTEPRPASPSETD) are disordered. N-linked (GlcNAc...) (complex) asparagine; alternate glycosylation is present at asparagine 1870. N-linked (GlcNAc...) (hybrid) asparagine; alternate glycosylation occurs at asparagine 1870. 7 disulfide bridges follow: cysteine 1894-cysteine 1920, cysteine 1898-cysteine 1905, cysteine 1929-cysteine 1940, cysteine 1997-cysteine 2025, cysteine 2001-cysteine 2007, cysteine 2006-cysteine 2077, and cysteine 2036-cysteine 2049. One copy of the Type IIIA repeat lies at 1894–1996 (CLSRCAGEPS…DKSISSGFFE (103 aa)). The stretch at 1997-2130 (CERLCDMDPC…VGNFSAARDR (134 aa)) is one Type IIIB repeat. Asparagine 2014 is a glycosylation site (N-linked (GlcNAc...) (high mannose) asparagine). A glycan (N-linked (GlcNAc...) (high mannose) asparagine) is linked at asparagine 2123. 3 cysteine pairs are disulfide-bonded: cysteine 2131-cysteine 2155, cysteine 2135-cysteine 2141, and cysteine 2164-cysteine 2173. The stretch at 2131–2188 (CLWECSRHQDCLVTTLQTQPGAVRCMFYADTQSCTHSLQAQNCRLLLHEEATYIYRKP) is one Type IIIA repeat. Position 2185 is an iodotyrosine (tyrosine 2185). The tract at residues 2189 to 2769 (NIPLPGFGTS…PELASKTYSK (581 aa)) is cholinesterase-like (ChEL). Residue asparagine 2251 is glycosylated (N-linked (GlcNAc...) (complex) asparagine; alternate). N-linked (GlcNAc...) (hybrid) asparagine; alternate glycosylation occurs at asparagine 2251. Asparagine 2296 carries N-linked (GlcNAc...) (high mannose) asparagine glycosylation. Cysteine 2443 and cysteine 2454 are oxidised to a cystine. Tyrosine 2541 bears the Thyroxine mark. An Iodotyrosine; alternate modification is found at tyrosine 2574. Residue tyrosine 2574 is modified to Thyroxine; alternate. Residue tyrosine 2574 is modified to Triiodothyronine; alternate. Position 2574 is a diiodotyrosine; alternate (tyrosine 2574). 2 positions are modified to iodotyrosine: tyrosine 2588 and tyrosine 2618. Cysteine 2592 and cysteine 2716 form a disulfide bridge. Diiodotyrosine is present on tyrosine 2698. The tract at residues 2730-2769 (ADETKDGPSADSEEEDQPAGSGLTEDLLGLPELASKTYSK) is disordered. At tyrosine 2767 the chain carries Iodotyrosine; alternate. Tyrosine 2767 carries the post-translational modification Thyroxine; alternate. Tyrosine 2767 carries the post-translational modification Triiodothyronine; alternate. At tyrosine 2767 the chain carries Diiodotyrosine; alternate.

The protein belongs to the type-B carboxylesterase/lipase family. Monomer. Homodimer (via ChEL region); occurs in the endoplasmic reticulum and is required for export to the Golgi apparatus. Homooligomer; disulfide-linked; stored in this form in the thyroid follicle lumen. In terms of processing, iodinated on tyrosine residues by TPO. There are 4 pairs of iodinated tyrosines used for coupling: acceptor Tyr-24 is coupled to donor Tyr-149 or Tyr-234, acceptor Tyr-2574 is coupled to donor Tyr-2541, acceptor Tyr-2767 in monomer 1 is coupled to donor Tyr-2767 in monomer 2 and acceptor Tyr-1310 in monomer 1 is coupled to donor Tyr-108 in monomer 2. Post-translationally, sulfated tyrosines are desulfated during iodination. Undergoes sequential proteolysis by cathepsins to release thyroxine (T4) and triiodothyronine (T3) hormones. In the thyroid follicle lumen, cross-linked TG (storage form) is solubilized by limited proteolysis mediated by cathepsins CTSB and/or CTSL. Partially cleaved TG is further processed by CTSK/cathepsin K and/or CTSL resulting in the release of T4. Following endocytosis, further processing occurs leading to the release of T3 and more T4 hormones. Specifically expressed in the thyroid gland.

It localises to the secreted. Acts as a substrate for the production of iodinated thyroid hormones thyroxine (T4) and triiodothyronine (T3). The synthesis of T3 and T4 involves iodination of selected tyrosine residues of TG/thyroglobulin followed by their oxidative coupling. Following TG re-internalization and lysosomal-mediated proteolysis, T3 and T4 are released from the polypeptide backbone leading to their secretion into the bloodstream. One dimer produces 7 thyroid hormone molecules. The chain is Thyroglobulin (TG) from Bos taurus (Bovine).